Here is a 634-residue protein sequence, read N- to C-terminus: 1-deoxy-D-xylulose-5-phosphate synthase (634 aa).

Thiamine diphosphate-binding positions include histidine 74 and alanine 115–serine 117. Aspartate 146 lines the Mg(2+) pocket. Residues glycine 147–alanine 148, asparagine 176, tyrosine 283, and glutamate 365 each bind thiamine diphosphate. A Mg(2+)-binding site is contributed by asparagine 176.

It belongs to the transketolase family. DXPS subfamily. As to quaternary structure, homodimer. Requires Mg(2+) as cofactor. It depends on thiamine diphosphate as a cofactor.

The catalysed reaction is D-glyceraldehyde 3-phosphate + pyruvate + H(+) = 1-deoxy-D-xylulose 5-phosphate + CO2. It functions in the pathway metabolic intermediate biosynthesis; 1-deoxy-D-xylulose 5-phosphate biosynthesis; 1-deoxy-D-xylulose 5-phosphate from D-glyceraldehyde 3-phosphate and pyruvate: step 1/1. In terms of biological role, catalyzes the acyloin condensation reaction between C atoms 2 and 3 of pyruvate and glyceraldehyde 3-phosphate to yield 1-deoxy-D-xylulose-5-phosphate (DXP). This is 1-deoxy-D-xylulose-5-phosphate synthase from Burkholderia orbicola (strain MC0-3).